Here is a 288-residue protein sequence, read N- to C-terminus: NAD kinase (288 aa).

D73 serves as the catalytic Proton acceptor. Residues 73–74, R78, 144–145, D174, 185–190, and A209 each bind NAD(+); these read DG, NE, and TAYSLS.

This sequence belongs to the NAD kinase family. A divalent metal cation is required as a cofactor.

It localises to the cytoplasm. It carries out the reaction NAD(+) + ATP = ADP + NADP(+) + H(+). Its function is as follows. Involved in the regulation of the intracellular balance of NAD and NADP, and is a key enzyme in the biosynthesis of NADP. Catalyzes specifically the phosphorylation on 2'-hydroxyl of the adenosine moiety of NAD to yield NADP. This is NAD kinase from Porphyromonas gingivalis (strain ATCC BAA-308 / W83).